We begin with the raw amino-acid sequence, 307 residues long: Fructokinase (307 aa).

It belongs to the carbohydrate kinase PfkB family.

It carries out the reaction D-fructose + ATP = D-fructose 6-phosphate + ADP + H(+). Involved in sucrose metabolism. In Klebsiella pneumoniae, this protein is Fructokinase (scrK).